Reading from the N-terminus, the 594-residue chain is P-granule-associated novel protein 1 (594 aa).

The first 18 residues, 1 to 18 (MRSLLSFVLLALARIAIS), serve as a signal peptide directing secretion. Residues 19 to 513 (EETKSCIDIE…PEEEEVYRSG (495 aa)) are Extracellular-facing. 15 LRR repeats span residues 78–101 (GTEL…LFEN), 103–124 (FAKQ…SFQS), 125–149 (LGGS…LFTG), 150–173 (LKSL…AFEE), 175–197 (KKVE…TFDG), 198–221 (MKNL…AFRG), 222–245 (LNSL…IFSA), 246–269 (LKNL…SFPK), 271–290 (EKLV…KLKD), 291–315 (LPSL…MFGL), 318–341 (SDRI…AFQH), 343–365 (PNLI…SPSQ), 374–397 (LKKL…ELPK), 399–419 (LSSL…ALEG), and 420–442 (MEIK…TFDS). A helical membrane pass occupies residues 514-534 (WITVAATILTIVTIVIMVIIA). At 535–594 (MLYFKDARYQFPLRGRRSDSDLHKLIENDPLNIASDSILVVPAMPKRNTGPKKTVRFQNF) the chain is on the cytoplasmic side.

As to quaternary structure, interacts with glh-1. Interacts (via LRR regions) with myrf-1 (via C-terminus); the interaction promotes the role of myrf-1 in the synaptic remodeling of DD GABAergic motor neurons at the cell membrane. In terms of tissue distribution, expressed in the germline and somatic cells. Expressed in the germline and somatic cells. Expressed at higher levels in germline cells relative to somatic cells. As to expression, expressed in germline cells. In terms of tissue distribution, highly expressed in the pharynx and at lower levels in the intestine, but not detected in other tissues. Other studies suggest a broader expression pattern in somatic tissues: from embryogenesis to adult stages, expressed strongly in body wall muscle, vulva, somatic gonad and pharynx, at lower levels in the nerve ring, hypodermis, and rectal epithelia, and very weakly in the intestine.

It localises to the cytoplasm. The protein localises to the apical cell membrane. Functionally, regulates diverse developmental processes including larval molting and gonad maturation. Its function is as follows. Promotes the localization of myrf-1 and myrf-2 to the cell membrane. In association with myrf-1, promotes the synaptic remodeling of DD GABAergic motor neurons whereby new synapses form in the dorsal processes of DD neurons. This chain is P-granule-associated novel protein 1, found in Caenorhabditis elegans.